A 236-amino-acid chain; its full sequence is Phosphoribosylaminoimidazole-succinocarboxamide synthase (236 aa).

This sequence belongs to the SAICAR synthetase family.

It carries out the reaction 5-amino-1-(5-phospho-D-ribosyl)imidazole-4-carboxylate + L-aspartate + ATP = (2S)-2-[5-amino-1-(5-phospho-beta-D-ribosyl)imidazole-4-carboxamido]succinate + ADP + phosphate + 2 H(+). Its pathway is purine metabolism; IMP biosynthesis via de novo pathway; 5-amino-1-(5-phospho-D-ribosyl)imidazole-4-carboxamide from 5-amino-1-(5-phospho-D-ribosyl)imidazole-4-carboxylate: step 1/2. The sequence is that of Phosphoribosylaminoimidazole-succinocarboxamide synthase from Campylobacter jejuni (strain RM1221).